Reading from the N-terminus, the 354-residue chain is Serine/threonine-protein kinase-transforming protein mos (354 aa).

Residues 74–350 (VCLMHRLGSG…LLQRDLKAFR (277 aa)) enclose the Protein kinase domain. Residues 80–88 (LGSGGFGSV) and Lys101 each bind ATP. Asp209 acts as the Proton acceptor in catalysis.

It belongs to the protein kinase superfamily. Ser/Thr protein kinase family.

It carries out the reaction L-seryl-[protein] + ATP = O-phospho-L-seryl-[protein] + ADP + H(+). The catalysed reaction is L-threonyl-[protein] + ATP = O-phospho-L-threonyl-[protein] + ADP + H(+). The sequence is that of Serine/threonine-protein kinase-transforming protein mos (V-MOS) from Moloney murine sarcoma virus (strain ts110) (MoMSV).